A 429-amino-acid polypeptide reads, in one-letter code: Phosphoribosylamine--glycine ligase (429 aa).

The region spanning 109 to 316 (KDFLARHQIP…LVELCLAAID (208 aa)) is the ATP-grasp domain. 135–196 (VREQGAPIVV…EEFLDGEEAS (62 aa)) serves as a coordination point for ATP. The tract at residues 212 to 234 (SQDHKRVGDKDTGPNTGGMGAYS) is disordered. Residues 213-223 (QDHKRVGDKDT) are compositionally biased toward basic and acidic residues. The Mg(2+) site is built by E286 and N288.

This sequence belongs to the GARS family. The cofactor is Mg(2+). Mn(2+) serves as cofactor.

It carries out the reaction 5-phospho-beta-D-ribosylamine + glycine + ATP = N(1)-(5-phospho-beta-D-ribosyl)glycinamide + ADP + phosphate + H(+). It functions in the pathway purine metabolism; IMP biosynthesis via de novo pathway; N(1)-(5-phospho-D-ribosyl)glycinamide from 5-phospho-alpha-D-ribose 1-diphosphate: step 2/2. The polypeptide is Phosphoribosylamine--glycine ligase (Vibrio vulnificus (strain YJ016)).